A 524-amino-acid chain; its full sequence is Zinc finger CCCH domain-containing protein 37 (524 aa).

Positions 19 to 39 (ASTVSPAPPPPQQPLPPKTGL) are disordered. The span at 24-35 (PAPPPPQQPLPP) shows a compositional bias: pro residues. 3 consecutive C3H1-type zinc fingers follow at residues 174–202 (RAGE…HPIW), 225–253 (RPGE…HPRE), and 268–296 (RPSE…HPKD). The tract at residues 300–319 (PSSSQDIGSSVGLTSEPDAT) is disordered. 3 C3H1-type zinc fingers span residues 340 to 368 (RSGE…HPER), 420 to 448 (RPGQ…HPAD), and 473 to 501 (REGA…HPPP). The segment at 505–524 (MAKTTSEADAAGATNTDTTQ) is disordered. Over residues 512 to 524 (ADAAGATNTDTTQ) the composition is skewed to low complexity.

As to quaternary structure, interacts with HEN4. Interacts with FLK and PEP. In terms of tissue distribution, highly expressed in inflorescences, at intermediate levels in leaves and stems and at lower levels in roots.

It localises to the nucleus speckle. Involved in flower development. Functions in floral reproductive organ identity by binding AGAMOUS (AG) pre-mRNA and promoting its processing. Functions in association with HUA2 and HEN4. In Arabidopsis thaliana (Mouse-ear cress), this protein is Zinc finger CCCH domain-containing protein 37 (HUA1).